Here is a 570-residue protein sequence, read N- to C-terminus: Hydroxylamine reductase (570 aa).

4 residues coordinate [4Fe-4S] cluster: Cys5, Cys8, Cys17, and Cys23. Residues His266, Glu290, Cys334, Cys425, Cys453, Cys478, Glu513, and Lys515 each coordinate hybrid [4Fe-2O-2S] cluster. Cys425 is subject to Cysteine persulfide.

Belongs to the HCP family. [4Fe-4S] cluster serves as cofactor. Hybrid [4Fe-2O-2S] cluster is required as a cofactor.

Its subcellular location is the cytoplasm. It carries out the reaction A + NH4(+) + H2O = hydroxylamine + AH2 + H(+). In terms of biological role, catalyzes the reduction of hydroxylamine to form NH(3) and H(2)O. This chain is Hydroxylamine reductase, found in Clostridium botulinum (strain 657 / Type Ba4).